A 158-amino-acid chain; its full sequence is Small ribosomal subunit protein uS15 (158 aa).

The span at 1 to 18 shows a compositional bias: basic residues; the sequence is MARMHARKRGKSGSKRPP. A disordered region spans residues 1-21; the sequence is MARMHARKRGKSGSKRPPRTA.

It belongs to the universal ribosomal protein uS15 family. Part of the 30S ribosomal subunit.

The chain is Small ribosomal subunit protein uS15 from Pyrococcus abyssi (strain GE5 / Orsay).